A 246-amino-acid polypeptide reads, in one-letter code: DNA repair protein RecO (246 aa).

The protein belongs to the RecO family.

Its function is as follows. Involved in DNA repair and RecF pathway recombination. This is DNA repair protein RecO from Methylorubrum populi (strain ATCC BAA-705 / NCIMB 13946 / BJ001) (Methylobacterium populi).